Reading from the N-terminus, the 252-residue chain is tRNA (guanine-N(7)-)-methyltransferase (252 aa).

4 residues coordinate S-adenosyl-L-methionine: Glu-80, Glu-105, Asp-132, and Asp-155. Residue Asp-155 is part of the active site. Substrate-binding positions include Lys-159, Asp-191, and 231-234 (TKFE).

This sequence belongs to the class I-like SAM-binding methyltransferase superfamily. TrmB family.

It catalyses the reaction guanosine(46) in tRNA + S-adenosyl-L-methionine = N(7)-methylguanosine(46) in tRNA + S-adenosyl-L-homocysteine. It participates in tRNA modification; N(7)-methylguanine-tRNA biosynthesis. Functionally, catalyzes the formation of N(7)-methylguanine at position 46 (m7G46) in tRNA. This chain is tRNA (guanine-N(7)-)-methyltransferase, found in Actinobacillus succinogenes (strain ATCC 55618 / DSM 22257 / CCUG 43843 / 130Z).